Here is a 371-residue protein sequence, read N- to C-terminus: Ferrochelatase (371 aa).

The Fe cation site is built by His-218 and Glu-299.

The protein belongs to the ferrochelatase family.

Its subcellular location is the cytoplasm. It catalyses the reaction heme b + 2 H(+) = protoporphyrin IX + Fe(2+). It participates in porphyrin-containing compound metabolism; protoheme biosynthesis; protoheme from protoporphyrin-IX: step 1/1. Its function is as follows. Catalyzes the ferrous insertion into protoporphyrin IX. This chain is Ferrochelatase, found in Cupriavidus necator (strain ATCC 17699 / DSM 428 / KCTC 22496 / NCIMB 10442 / H16 / Stanier 337) (Ralstonia eutropha).